The following is a 1286-amino-acid chain: ABC transporter B family member 4 (1286 aa).

A disordered region spans residues 1-39; the sequence is MASESGLNGDPNILEEVSETKRDKEEEEEVKKTEKKDEE. The segment covering 18–39 has biased composition (basic and acidic residues); it reads SETKRDKEEEEEVKKTEKKDEE. The chain crosses the membrane as a helical span at residues 60 to 80; it reads FLLMILGTLGSIGNGLGFPLM. An ABC transmembrane type-1 1 domain is found at 63–349; the sequence is MILGTLGSIG…TSPCLSAFAA (287 aa). Asn-94 and Asn-97 each carry an N-linked (GlcNAc...) asparagine glycan. Transmembrane regions (helical) follow at residues 109-129, 186-206, 208-228, 288-308, and 317-337; these read FVWL…GWMI, IQLL…GWLL, LVML…AIVI, GLGL…AVWY, and GYTG…SMSL. The ABC transporter 1 domain maps to 384–620; sequence IELKDVYFTY…PEGAYSQLIR (237 aa). 419–426 contributes to the ATP binding site; the sequence is GQSGSGKS. Residues Asn-500 and Asn-571 are each glycosylated (N-linked (GlcNAc...) asparagine). Over residues 625–636 the composition is skewed to basic and acidic residues; the sequence is KKSDENAAEEQK. Residues 625 to 669 are disordered; the sequence is KKSDENAAEEQKMSSIESFKQSSLRKSSLGRSLSKGGSSRGNSSR. A compositionally biased stretch (low complexity) spans 646 to 669; it reads SSLRKSSLGRSLSKGGSSRGNSSR. An N-linked (GlcNAc...) asparagine glycan is attached at Asn-666. Ser-671 is modified (phosphoserine). The ABC transmembrane type-1 2 domain maps to 720–1007; that stretch reads LILGSISAAA…SSSLSPDSSK (288 aa). A run of 2 helical transmembrane segments spans residues 721–741 and 764–784; these read ILGS…GILI and IIFM…TFFF. N-linked (GlcNAc...) asparagine glycans are attached at residues Asn-816 and Asn-846. A run of 4 helical transmembrane segments spans residues 850 to 870, 871 to 891, 942 to 962, and 976 to 996; these read ILAG…VVLA, MLPL…GFSA, GIVS…SYAA, and TTFD…MAIS. Residues 1042–1279 form the ABC transporter 2 domain; that stretch reads IELRHVSFKY…KDGVYASLVQ (238 aa). An ATP-binding site is contributed by 1077–1084; the sequence is GESGSGKS. N-linked (GlcNAc...) asparagine glycans are attached at residues Asn-1131 and Asn-1230.

It belongs to the ABC transporter superfamily. ABCB family. Multidrug resistance exporter (TC 3.A.1.201) subfamily. In terms of assembly, interacts with 1-naphthylphthalamic acid (NPA). Phosphorylation level varies significantly during early response to bacterial elicitor. In terms of tissue distribution, mostly expressed in roots, especially in the root elongation zone and lateral roots. In mature portion of the root, expressed in the epidermis and cortex. In the root elongation zone, confined to epidermis. In root tips, present in the root cap, S3 columella and epidermal cells.

It localises to the cell membrane. Functionally, auxin influx transporter that mediates the transport of auxin in roots. Contributes to the basipetal transport in hypocotyls and root tips by establishing an auxin uptake sink in the root cap. Confers sensitivity to 1-N-naphthylphthalamic acid (NPA). Regulates the root elongation, the initiation of lateral roots and the development of root hairs. Can transport IAA, indole-3-propionic acid, NPA syringic acid, vanillic acid and some auxin metabolites, but not 2,4-D and 1-naphthaleneacetic acid. The polypeptide is ABC transporter B family member 4 (ABCB4) (Arabidopsis thaliana (Mouse-ear cress)).